Reading from the N-terminus, the 285-residue chain is NADPH-dependent 7-cyano-7-deazaguanine reductase (285 aa).

Isoleucine 91–serine 93 contacts substrate. Position 93–94 (serine 93–lysine 94) interacts with NADPH. Residue cysteine 193 is the Thioimide intermediate of the active site. Catalysis depends on aspartate 200, which acts as the Proton donor. Histidine 232–glutamate 233 contributes to the substrate binding site. Arginine 261–glycine 262 lines the NADPH pocket.

Belongs to the GTP cyclohydrolase I family. QueF type 2 subfamily. As to quaternary structure, homodimer.

The protein resides in the cytoplasm. The enzyme catalyses 7-aminomethyl-7-carbaguanine + 2 NADP(+) = 7-cyano-7-deazaguanine + 2 NADPH + 3 H(+). The protein operates within tRNA modification; tRNA-queuosine biosynthesis. Its function is as follows. Catalyzes the NADPH-dependent reduction of 7-cyano-7-deazaguanine (preQ0) to 7-aminomethyl-7-deazaguanine (preQ1). The sequence is that of NADPH-dependent 7-cyano-7-deazaguanine reductase from Shewanella baltica (strain OS223).